A 201-amino-acid chain; its full sequence is Holliday junction branch migration complex subunit RuvA (201 aa).

Residues 1 to 63 (MIAYLSGVVR…EDAQLLFGFP (63 aa)) are domain I. Residues 64–142 (DADHLKLFDL…EHLAAAASGA (79 aa)) form a domain II region. Residues 143–150 (AGGKRPAR) are flexible linker. Residues 151 to 201 (VSSTAGHDAVDALLALGFREAQVRAAVAELLGADPEASADTLIRKALGRLR) are domain III.

Belongs to the RuvA family. As to quaternary structure, homotetramer. Forms an RuvA(8)-RuvB(12)-Holliday junction (HJ) complex. HJ DNA is sandwiched between 2 RuvA tetramers; dsDNA enters through RuvA and exits via RuvB. An RuvB hexamer assembles on each DNA strand where it exits the tetramer. Each RuvB hexamer is contacted by two RuvA subunits (via domain III) on 2 adjacent RuvB subunits; this complex drives branch migration. In the full resolvosome a probable DNA-RuvA(4)-RuvB(12)-RuvC(2) complex forms which resolves the HJ.

It is found in the cytoplasm. The RuvA-RuvB-RuvC complex processes Holliday junction (HJ) DNA during genetic recombination and DNA repair, while the RuvA-RuvB complex plays an important role in the rescue of blocked DNA replication forks via replication fork reversal (RFR). RuvA specifically binds to HJ cruciform DNA, conferring on it an open structure. The RuvB hexamer acts as an ATP-dependent pump, pulling dsDNA into and through the RuvAB complex. HJ branch migration allows RuvC to scan DNA until it finds its consensus sequence, where it cleaves and resolves the cruciform DNA. The protein is Holliday junction branch migration complex subunit RuvA of Deinococcus radiodurans (strain ATCC 13939 / DSM 20539 / JCM 16871 / CCUG 27074 / LMG 4051 / NBRC 15346 / NCIMB 9279 / VKM B-1422 / R1).